Here is a 106-residue protein sequence, read N- to C-terminus: Small ribosomal subunit protein bS20 (106 aa).

Over residues 1–32 (MAQKKPKRNLSALKRHRQSLKRRLRNKAKKSA) the composition is skewed to basic residues. The interval 1–33 (MAQKKPKRNLSALKRHRQSLKRRLRNKAKKSAI) is disordered.

The protein belongs to the bacterial ribosomal protein bS20 family.

Functionally, binds directly to 16S ribosomal RNA. This chain is Small ribosomal subunit protein bS20 (rpsT), found in Thermus thermophilus (strain ATCC BAA-163 / DSM 7039 / HB27).